The sequence spans 2144 residues: Insulin-like receptor (2144 aa).

The first 43 residues, 1 to 43 (MFNMPRGVTKSKSKRGKIKMENDMAAAATTTACTLGHICVLCR), serve as a signal peptide directing secretion. Asn74 is a glycosylation site (N-linked (GlcNAc...) asparagine). The span at 174 to 199 (RRQHQQQHHHHYQHHHQQHHQQHHQR) shows a compositional bias: basic residues. The segment at 174-200 (RRQHQQQHHHHYQHHHQQHHQQHHQRQ) is disordered. An N-linked (GlcNAc...) asparagine glycan is attached at Asn203. The interval 229–256 (NYKQQQQLQHNQQLPRATPQQKQQEKDR) is disordered. Residues 232-242 (QQQQLQHNQQL) show a composition bias toward low complexity. Residues Asn265, Asn356, Asn376, Asn406, Asn468, and Asn509 are each glycosylated (N-linked (GlcNAc...) asparagine). 8 disulfide bridges follow: Cys531–Cys539, Cys535–Cys545, Cys546–Cys554, Cys550–Cys564, Cys567–Cys576, Cys580–Cys591, Cys597–Cys618, and Cys635–Cys638. The stretch at 542–586 (EHTCCSQDCLGGCVIDKNGNESCISCRNVSFNNICMDSCPKGYYQ) is one FU repeat. N-linked (GlcNAc...) asparagine glycosylation is found at Asn561 and Asn569. 11 N-linked (GlcNAc...) asparagine glycosylation sites follow: Asn751, Asn810, Asn824, Asn839, Asn864, Asn898, Asn946, Asn1053, Asn1147, Asn1218, and Asn1265. 2 Fibronectin type-III domains span residues 825–927 (VTTK…TNPG) and 928–1026 (RPSK…EYDD). The interval 1053–1084 (NGSSDKSDGAEGAALDSNAIPNGGATNPSRRR) is disordered. Residues 1210–1305 (LKVDLEHANN…EVEHIKVEPP (96 aa)) form the Fibronectin type-III 3 domain. The helical transmembrane segment at 1311–1331 (VFFWLLGIGLAFLIVSLFGYV) threads the bilayer. Residues 1332–2144 (CYLHKRKVPS…PPNGFIGREA (813 aa)) lie on the Cytoplasmic side of the membrane. Residues 1351-1354 (NPFY) form a chico-binding region. The residue at position 1354 (Tyr1354) is a Phosphotyrosine; by autocatalysis. In terms of domain architecture, Protein kinase spans 1371-1659 (IIQLAPLGQG…LEPQCPNSQF (289 aa)). ATP contacts are provided by residues 1377–1385 (LGQGSFGMV) and Lys1405. Residue Asp1519 is the Proton acceptor of the active site. Phosphotyrosine; by autocatalysis is present on residues Tyr1545, Tyr1549, and Tyr1550. Disordered stretches follow at residues 1690 to 1724 (VPLD…DQPP), 1788 to 1871 (RGYE…KKTV), 1886 to 1962 (LFNH…ISDN), and 2020 to 2144 (ISHN…GREA). Ser1816 carries the post-translational modification Phosphoserine. Low complexity-rich tracts occupy residues 1849–1860 (STASAGSSNASS) and 1894–1916 (SNAS…NLTS). Residues 2042–2062 (SDEDNEQEEDDEDEDDDVDDE) are compositionally biased toward acidic residues. Residues 2063-2073 (HVEHIKMERMP) show a composition bias toward basic and acidic residues. The span at 2084–2120 (SKTQPPRSRSVSQTRKSPTNPNSGIGATGAGNRSNLL) shows a compositional bias: polar residues.

It belongs to the protein kinase superfamily. Tyr protein kinase family. Insulin receptor subfamily. In terms of assembly, tetramer of 2 alpha and 2 beta chains linked by disulfide bonds. The alpha chains contribute to the formation of the ligand-binding domain, while the beta chains carry the kinase domain. Interacts (via C-terminal cytoplasmic region) with dock/dreadlocks (via SH2 and SH3 domains); when autophosphorylated. May interact (via beta subunit) with chico/IRS-1; this interaction may lead to tyrosine phosphorylation of the insulin receptor substrate chico. Interacts with Elp6; the interaction may stabilize Elp6. Mn(2+) is required as a cofactor. The 280 kDa proreceptor is proteolytically processed to form a 120 kDa alpha subunit and a 170 kDa beta subunit. The beta subunit undergoes cell-specific cleavage to generate a 90 kDa beta subunit and a free 60 kDa C-terminal subunit. Both the 90 kDa and the 170 kDa beta subunits can assemble with the alpha subunits to form mature receptors. Post-translationally, autophosphorylated on tyrosine residues, including Tyr-1549 and Tyr-1550, in response to exogenous insulin. Tyr-1549 and Tyr-1550 are dephosphorylated by Ptp61F recruited by the dock/dreadlocks adapter protein. In terms of processing, phosphorylation of Tyr-1354 is required for Chico-binding.

Its subcellular location is the membrane. The protein localises to the cell projection. It is found in the axon. It localises to the growth cone membrane. It carries out the reaction L-tyrosyl-[protein] + ATP = O-phospho-L-tyrosyl-[protein] + ADP + H(+). Activated in response to insulin. Autophosphorylation activates the kinase activity. Functionally, has a ligand-stimulated tyrosine-protein kinase activity. Binds 3 insulin-like peptide ligands. Regulates cell number and cell size during development by regulating cell growth and survival, affecting body size and organ size, including ovaries and imaginal disks. Plays a role in life-span determination. May be involved in regulation of other neuroendocrine signaling pathways. Involved in the development of the embryonic nervous system. Functions upstream of dock/dreadlocks for photoreceptor (R cell) axon guidance and targeting in the visual system. Involved in the acs mediated recovery of gut enterocytes following the cytoplasmic purge response to intestinal bacterial infection. This chain is Insulin-like receptor, found in Drosophila melanogaster (Fruit fly).